The chain runs to 240 residues: Probable Ni/Fe-hydrogenase B-type cytochrome subunit (240 aa).

The next 4 helical transmembrane spans lie at 31–51 (LWHW…YFIG), 75–95 (FAAG…AFVG), 142–163 (LAMF…FALY), and 196–213 (LGMW…YLAV).

This sequence belongs to the HupC/HyaC/HydC family.

It localises to the cell membrane. Its function is as follows. Probable b-type cytochrome. In Azotobacter vinelandii, this protein is Probable Ni/Fe-hydrogenase B-type cytochrome subunit (hoxZ).